A 171-amino-acid chain; its full sequence is ATP synthase subunit b (171 aa).

The chain crosses the membrane as a helical span at residues 2–22; that stretch reads FLVKMVLGFLIFLSPLCATGL.

This sequence belongs to the ATPase B chain family. F-type ATPases have 2 components, F(1) - the catalytic core - and F(0) - the membrane proton channel. F(1) has five subunits: alpha(3), beta(3), gamma(1), delta(1), epsilon(1). F(0) has three main subunits: a(1), b(2) and c(10-14). The alpha and beta chains form an alternating ring which encloses part of the gamma chain. F(1) is attached to F(0) by a central stalk formed by the gamma and epsilon chains, while a peripheral stalk is formed by the delta and b chains.

Its subcellular location is the cell inner membrane. Functionally, f(1)F(0) ATP synthase produces ATP from ADP in the presence of a proton or sodium gradient. F-type ATPases consist of two structural domains, F(1) containing the extramembraneous catalytic core and F(0) containing the membrane proton channel, linked together by a central stalk and a peripheral stalk. During catalysis, ATP synthesis in the catalytic domain of F(1) is coupled via a rotary mechanism of the central stalk subunits to proton translocation. Component of the F(0) channel, it forms part of the peripheral stalk, linking F(1) to F(0). The sequence is that of ATP synthase subunit b from Helicobacter pylori (strain Shi470).